Here is a 464-residue protein sequence, read N- to C-terminus: ATP synthase subunit beta (464 aa).

152–159 (GGAGVGKT) contributes to the ATP binding site.

Belongs to the ATPase alpha/beta chains family. As to quaternary structure, F-type ATPases have 2 components, CF(1) - the catalytic core - and CF(0) - the membrane proton channel. CF(1) has five subunits: alpha(3), beta(3), gamma(1), delta(1), epsilon(1). CF(0) has three main subunits: a(1), b(2) and c(9-12). The alpha and beta chains form an alternating ring which encloses part of the gamma chain. CF(1) is attached to CF(0) by a central stalk formed by the gamma and epsilon chains, while a peripheral stalk is formed by the delta and b chains.

Its subcellular location is the cell membrane. It carries out the reaction ATP + H2O + 4 H(+)(in) = ADP + phosphate + 5 H(+)(out). In terms of biological role, produces ATP from ADP in the presence of a proton gradient across the membrane. The catalytic sites are hosted primarily by the beta subunits. This is ATP synthase subunit beta from Clostridioides difficile (strain 630) (Peptoclostridium difficile).